Here is a 94-residue protein sequence, read N- to C-terminus: ESAT-6-like protein EsxL (94 aa).

The protein belongs to the WXG100 family. ESAT-6 subfamily. In terms of assembly, strongly interacts with EsxK to form a heterodimeric complex under reducing conditions.

The protein localises to the secreted. The polypeptide is ESAT-6-like protein EsxL (Mycobacterium tuberculosis (strain CDC 1551 / Oshkosh)).